The sequence spans 832 residues: Prickle-like protein 1-B (832 aa).

Residues 14–122 (FGCQRSSTSD…NIKMLSRAVM (109 aa)) form the PET domain. 3 consecutive LIM zinc-binding domains span residues 124–188 (AMCE…ELLK), 189–249 (PRCS…HYAE), and 250–313 (YCES…EDVH). Disordered regions lie at residues 312 to 346 (VHASDSSDSAFQSARSRESRRSVRMGKSSRSADQC), 428 to 455 (QQPSEDNRSTEHWMSENIKGKNDLQRNN), 602 to 701 (ICQE…KERN), and 766 to 832 (CSSS…CIIS). 2 stretches are compositionally biased toward basic and acidic residues: residues 432 to 453 (EDNRSTEHWMSENIKGKNDLQR) and 603 to 614 (CQEKPPPEEKPM). 2 stretches are compositionally biased toward basic residues: residues 669–680 (RPHHHRRRKSRK) and 816–832 (TKSKKKKGHKGKNCIIS). A Cysteine methyl ester modification is found at Cys829. Cys829 carries the S-farnesyl cysteine lipid modification. Positions 830–832 (IIS) are cleaved as a propeptide — removed in mature form.

It belongs to the prickle / espinas / testin family. Interacts with dvl2/dsh and mapk8/jnk1. Expressed in the dorsal marginal zone of early gastrulae (stage 10). As gastrulation proceeds, expression expands to include the lateral and ventral marginal zones, excluding the few rows of cells above the blastopore lip. Expression moves dorsally with gastrulation cell movements, and by the end of gastrulation expression is seen in dorsal mesoderm and posterior but not anterior neural ectoderm. Expression becomes down-regulated in mesoderm but remains strong in posterior ectoderm through the neurula stages. During tailbud stages, expressed in the pronephric duct, tailbud, tailtip and forming somites. In the most posterior regions, expressed in notochord and in the floorplate of the neural tube with weak expression in the roofplate. At stage 30, expressed in a complex pattern in the head including strong expression in the lens and otic vesicle.

The protein resides in the cell membrane. Functionally, acts in a planar cell polarity (PCP) complex; polarization along the apical/basal axis of epithelial cells. Regulates the polarized assembly of fibronectrin on the surface of the mesoderm during gastrulation. Essential for gastrulation cell movements, cooperating with dvl2/dsh to activate jnk. Acts together with tes to control axial elongation. The chain is Prickle-like protein 1-B (prickle1-b) from Xenopus laevis (African clawed frog).